Here is a 193-residue protein sequence, read N- to C-terminus: Putative manganese efflux pump MntP (193 aa).

Transmembrane regions (helical) follow at residues 3–23 (PLSI…AAIG), 37–57 (VRAG…GWML), 66–86 (AAFD…HMIV), 109–131 (LALA…SLAF), 146–166 (CTLS…ALIG), and 171–191 (ILGG…HLSG).

The protein belongs to the MntP (TC 9.B.29) family.

The protein resides in the cell inner membrane. Probably functions as a manganese efflux pump. This chain is Putative manganese efflux pump MntP, found in Xanthomonas campestris pv. campestris (strain 8004).